The following is a 1123-amino-acid chain: Nicotinic receptor-associated protein 4 (1123 aa).

Positions 1–18 (MGSLPLILLSLLLPGALA) are cleaved as a signal peptide. Residues 19-1071 (NVYSCAGSVK…TSSKRANDVD (1053 aa)) lie on the Lumenal side of the membrane. The chain crosses the membrane as a helical span at residues 1072-1092 (ISVGTFLSLPFFVTLALVFFN). At 1093-1123 (QNRVLELLGTFIDWARNTFAPTADNHHRKRK) the chain is on the cytoplasmic side.

As to quaternary structure, may interact with nra-2 in the ER. In terms of tissue distribution, expressed in body wall, pharyngeal, uterine and vulval muscles, motor neurons, nerve ring, motor and ventral cord neurons, hypodermal cells in the tail, vulval epithelium and intestine.

It localises to the endoplasmic reticulum membrane. In terms of biological role, involved in the recognition and selection of protein complexes to exit the endoplasmic reticulum (ER). In muscles, regulates levamisole-sensitive nicotinic acetylcholine receptor (L-AChR) subunit composition, possibly by allowing only specific L-AChR subunit combinations to exit the ER. Specifically, may promote the inclusion of alpha subunit unc-38 into and the exclusion of unc-29 from L-AChR. Regulates L-AChR sensitivity to agonists such as nicotine and levamisole at neuro-muscular junctions. This Caenorhabditis elegans protein is Nicotinic receptor-associated protein 4.